The following is a 188-amino-acid chain: MFISSAYAQNTETSLEHIKNVAERIDRVFPPFDFVHFGSHLFWLAISFGLFYLFISRVIVPRIGGVIETRRDRIASDLDQAMRMKQEADIVVETYERKLAQARSQAHVIAQTASEEIKQKVELERKEIEANLEKKLTDAEKQIAKIRDKAMKSVGSIAEEVALEIVKKLIDVEVSKESVRSAVKATGY.

The helical transmembrane segment at 35–55 threads the bilayer; sequence VHFGSHLFWLAISFGLFYLFI.

The protein belongs to the ATPase B chain family. F-type ATPases have 2 components, F(1) - the catalytic core - and F(0) - the membrane proton channel. F(1) has five subunits: alpha(3), beta(3), gamma(1), delta(1), epsilon(1). F(0) has three main subunits: a(1), b(2) and c(10-14). The alpha and beta chains form an alternating ring which encloses part of the gamma chain. F(1) is attached to F(0) by a central stalk formed by the gamma and epsilon chains, while a peripheral stalk is formed by the delta and b chains.

The protein resides in the cell inner membrane. F(1)F(0) ATP synthase produces ATP from ADP in the presence of a proton or sodium gradient. F-type ATPases consist of two structural domains, F(1) containing the extramembraneous catalytic core and F(0) containing the membrane proton channel, linked together by a central stalk and a peripheral stalk. During catalysis, ATP synthesis in the catalytic domain of F(1) is coupled via a rotary mechanism of the central stalk subunits to proton translocation. Functionally, component of the F(0) channel, it forms part of the peripheral stalk, linking F(1) to F(0). The polypeptide is ATP synthase subunit b 1 (Bartonella henselae (strain ATCC 49882 / DSM 28221 / CCUG 30454 / Houston 1) (Rochalimaea henselae)).